We begin with the raw amino-acid sequence, 303 residues long: UPF0282 protein PAE3680 (303 aa).

This sequence belongs to the UPF0282 family.

The sequence is that of UPF0282 protein PAE3680 from Pyrobaculum aerophilum (strain ATCC 51768 / DSM 7523 / JCM 9630 / CIP 104966 / NBRC 100827 / IM2).